The chain runs to 453 residues: Malate dehydrogenase [NADP], chloroplastic (453 aa).

Residues 1-68 (MAVVKLSPWA…RLSSPASIRC (68 aa)) constitute a chloroplast transit peptide. Cys88 and Cys93 are disulfide-bonded. Position 117–123 (117–123 (GAAGMIS)) interacts with NADP(+). Arg198 and Arg204 together coordinate substrate. Residues Asn211, Gln218, and 235 to 237 (VGN) each bind NADP(+). Substrate is bound by residues Asn237 and Arg268. Residue His293 is the Proton acceptor of the active site. An intrachain disulfide couples Cys429 to Cys441.

The protein belongs to the LDH/MDH superfamily. MDH type 2 family. Homodimer.

The protein resides in the plastid. Its subcellular location is the chloroplast. It carries out the reaction (S)-malate + NADP(+) = oxaloacetate + NADPH + H(+). Chloroplast NADP-MDH is activated upon illumination. In order to be enzymatically active, disulfide bridges on the protein must be reduced by thioredoxin which receives electrons from ferredoxin and the electron transport system of photosynthesis. Its function is as follows. The chloroplastic, NADP-dependent form is essential for the photosynthesis C4 cycle, which allows plants to circumvent the problem of photorespiration. In C4 plants, NADP-MDH activity acts to convert oxaloacetate to malate in chloroplasts of mesophyll cells for transport to the bundle sheath cells. This Flaveria bidentis (Coastal plain yellowtops) protein is Malate dehydrogenase [NADP], chloroplastic.